A 426-amino-acid polypeptide reads, in one-letter code: Elongation factor 1-alpha (426 aa).

One can recognise a tr-type G domain in the interval 5 to 221 (KPHINLAVIG…NALKEPEKPT (217 aa)). The interval 14-21 (GHIDHGKS) is G1. A GTP-binding site is contributed by 14-21 (GHIDHGKS). A Mg(2+)-binding site is contributed by Ser-21. The tract at residues 70–74 (GITID) is G2. Residues 91–94 (DCPG) are G3. Residues 91–95 (DCPGH) and 146–149 (NKMD) contribute to the GTP site. Positions 146–149 (NKMD) are G4. A G5 region spans residues 185–187 (SAF).

Belongs to the TRAFAC class translation factor GTPase superfamily. Classic translation factor GTPase family. EF-Tu/EF-1A subfamily.

Its subcellular location is the cytoplasm. The catalysed reaction is GTP + H2O = GDP + phosphate + H(+). GTP hydrolase that promotes the GTP-dependent binding of aminoacyl-tRNA to the A-site of ribosomes during protein biosynthesis. The chain is Elongation factor 1-alpha from Methanocella arvoryzae (strain DSM 22066 / NBRC 105507 / MRE50).